The primary structure comprises 402 residues: NADH-quinone oxidoreductase subunit D (402 aa).

Belongs to the complex I 49 kDa subunit family. As to quaternary structure, NDH-1 is composed of 14 different subunits. Subunits NuoB, C, D, E, F, and G constitute the peripheral sector of the complex.

Its subcellular location is the cell inner membrane. The enzyme catalyses a quinone + NADH + 5 H(+)(in) = a quinol + NAD(+) + 4 H(+)(out). Functionally, NDH-1 shuttles electrons from NADH, via FMN and iron-sulfur (Fe-S) centers, to quinones in the respiratory chain. The immediate electron acceptor for the enzyme in this species is believed to be ubiquinone. Couples the redox reaction to proton translocation (for every two electrons transferred, four hydrogen ions are translocated across the cytoplasmic membrane), and thus conserves the redox energy in a proton gradient. This is NADH-quinone oxidoreductase subunit D from Protochlamydia amoebophila (strain UWE25).